Reading from the N-terminus, the 158-residue chain is Anaerobic nitrite reductase AHB2 (158 aa).

The region spanning 5-154 (GFTEKQEALV…LALAIKTEMK (150 aa)) is the Globin domain. The Homodimerization motif lies at 38–42 (EIAPA). Positions 48, 62, 66, and 101 each coordinate heme b. A Homodimerization motif is present at residues 108–120 (DPHFEVVKEALLR).

This sequence belongs to the plant globin family. As to quaternary structure, unable to dimerize. The cofactor is heme b. In terms of tissue distribution, expressed in rosette leaves but not in roots.

It localises to the cytoplasm. It is found in the nucleus. It catalyses the reaction Fe(III)-heme b-[protein] + nitric oxide + H2O = Fe(II)-heme b-[protein] + nitrite + 2 H(+). Functionally, phytoglobin that reduces nitrite to nitric oxide (NO) under anoxic conditions (e.g. during flooding or in waterlogged soil). May not function as an oxygen storage or transport protein. Has an unusually high affinity for O(2) through an hexacoordinate heme iron because of a very low dissociation constant. The polypeptide is Anaerobic nitrite reductase AHB2 (Arabidopsis thaliana (Mouse-ear cress)).